Reading from the N-terminus, the 344-residue chain is Arginine N-succinyltransferase (344 aa).

Residue L125 participates in succinyl-CoA binding. H229 functions as the Proton donor in the catalytic mechanism.

The protein belongs to the arginine N-succinyltransferase family.

It catalyses the reaction succinyl-CoA + L-arginine = N(2)-succinyl-L-arginine + CoA + H(+). It functions in the pathway amino-acid degradation; L-arginine degradation via AST pathway; L-glutamate and succinate from L-arginine: step 1/5. Catalyzes the transfer of succinyl-CoA to arginine to produce N(2)-succinylarginine. This is Arginine N-succinyltransferase from Escherichia coli O17:K52:H18 (strain UMN026 / ExPEC).